The primary structure comprises 120 residues: Large ribosomal subunit protein bL17 (120 aa).

Belongs to the bacterial ribosomal protein bL17 family. Part of the 50S ribosomal subunit. Contacts protein L32.

This is Large ribosomal subunit protein bL17 from Geobacillus thermodenitrificans (strain NG80-2).